The chain runs to 127 residues: UPF0102 protein Paes_0016 (127 aa).

Belongs to the UPF0102 family.

This is UPF0102 protein Paes_0016 from Prosthecochloris aestuarii (strain DSM 271 / SK 413).